The primary structure comprises 61 residues: Nakoroxin (61 aa).

Intrachain disulfides connect C3/C19, C12/C37, C41/C49, and C50/C55.

Belongs to the three-finger toxin family. Short-chain subfamily. Expressed by the venom gland.

The protein resides in the secreted. Shows no cytotoxicity and does not inhibit the binding of alpha-bungarotoxin to nicotinic acetylcholine receptors of muscle and alpha-7/CHRNA7 types. However, it potentiates the binding of alpha-bungarotoxin to the acetylcholine-binding protein from Lymnaea stagnalis. The sequence is that of Nakoroxin from Naja kaouthia (Monocled cobra).